Consider the following 180-residue polypeptide: MAETAETINTTISSPPPESESSTTISAMTDPTSQEAASKDTDLTKEAESEKKPGGISLRIWPPTQKTRDAVLNRLIETLSTESILSKRYGTLKSDDATTVAKLIEEEAYGVASNAVSSDDDGIKILELYSKEISKRMLESVKARSNASVGNGSVEDANTDASEVSKDDAGPASEEEKSEA.

Positions 1–26 (MAETAETINTTISSPPPESESSTTIS) are enriched in low complexity. 2 disordered regions span residues 1-61 (MAET…LRIW) and 140-180 (SVKA…KSEA). The segment covering 27-36 (AMTDPTSQEA) has biased composition (polar residues). The segment covering 37–53 (ASKDTDLTKEAESEKKP) has biased composition (basic and acidic residues). The tract at residues 44–147 (TKEAESEKKP…LESVKARSNA (104 aa)) is WPP. Position 173 is a phosphoserine (Ser-173).

In terms of assembly, binds to FPP proteins. Interacts with WAP, WIP1, WIP2 and WIP3 through its WPP domain. Interacts with WIT1 and HSP70-1. Expressed in roots, stems, leaves and flowers.

The protein localises to the nucleus envelope. Its subcellular location is the cytoplasm. The protein resides in the nucleus. It is found in the golgi apparatus. Regulates the mitotic activity in roots. Plays a role with HSP70-1 in facilitating WIT1 nuclear envelope targeting. The chain is WPP domain-containing protein 2 (WPP2) from Arabidopsis thaliana (Mouse-ear cress).